A 445-amino-acid polypeptide reads, in one-letter code: Cytochrome P450 monooxygenase penB (445 aa).

Cysteine 381 is a binding site for heme.

This sequence belongs to the cytochrome P450 family. Heme is required as a cofactor.

It functions in the pathway secondary metabolite biosynthesis. It participates in alkaloid biosynthesis. The protein operates within mycotoxin biosynthesis. Functionally, cytochrome P450 monooxygenase; part of the gene cluster that mediates the biosynthesis of penigequinolones, potent insecticidal alkaloids that contain a highly modified 10-carbon prenyl group. The first stage is catalyzed by the nonribosomal peptide synthetase penN that condenses anthranilic acid and O-methyl-L-tyrosine to produce 4'-methoxycyclopeptin. 4'-methoxycyclopeptin is then converted to 4'-methoxydehydrocyclopeptin by the ketoglutarate-dependent dioxygenase penM through dehydrogenation to form a double bond between C-alpha and C-beta of the O-methyltyrosine side chain. PenM also converts its first product methoxydehydrocyclopeptin to 4'-methoxycyclopenin. The following conversion of 4'methoxycyclopenin into 4'-methoxyviridicatin is catalyzed by the cyclopenase penL. 4'-methoxyviridicatin is the precursor of quinolone natural products, and is further converted to quinolinone B. The prenyltransferase penI then catalyzes the canonical Friedel-Crafts alkylation of quinolinone B with dimethylallyl cation to yield dimethylallyl quinolone, which is subjected to FAD-dependent dehydrogenation by the FAD-linked oxidoreductase penH to yield conjugated aryl diene. The delta(3') double bond then serves as the site of the second alkylation with DMAPP catalyzed by the prenyltransferase penG to yield a carbenium ion intermediate, which can be attacked by H(2)O to yield a styrenyl quinolone containing a C3'-hydroxyprenyl chain, or undergo cyclization to yield yaequinolones J1 and J2. The conversion of the styrenyl quinolone into the tetrahydrofuran-containing yaequinolone C is performed by the FAD-dependent monooxygenase penE and involves epoxidation of the terminal C7'-C8' olefin, followed by epoxide ring opening initiated by the C3' hydroxyl group. The predicted cysteine hydrolase penJ acts as an epoxide hydrolase that enhances the rate of the 5-exo-tet cyclization step, increasing the yield of yaequinolone C. PenF catalyzes the cationic rearrangement of the epoxide formed by penE (before ring opening to produce yaequinolone C) into yaequinolone D. Finally, the short-chain dehydrogenase/reductase (SDR)-like reductase penD, catalyzes both the dehydration of yaequinolone D and the reduction of the resulting oxonium to yield penigequinolone. This is Cytochrome P450 monooxygenase penB from Penicillium thymicola.